The following is a 510-amino-acid chain: Histidine ammonia-lyase (510 aa).

A cross-link (5-imidazolinone (Ala-Gly)) is located at residues 143 to 145 (ASG). Ser144 carries the 2,3-didehydroalanine (Ser) modification.

The protein belongs to the PAL/histidase family. In terms of processing, contains an active site 4-methylidene-imidazol-5-one (MIO), which is formed autocatalytically by cyclization and dehydration of residues Ala-Ser-Gly.

The protein resides in the cytoplasm. The enzyme catalyses L-histidine = trans-urocanate + NH4(+). The protein operates within amino-acid degradation; L-histidine degradation into L-glutamate; N-formimidoyl-L-glutamate from L-histidine: step 1/3. This Shewanella sediminis (strain HAW-EB3) protein is Histidine ammonia-lyase.